Here is a 188-residue protein sequence, read N- to C-terminus: Elongation factor P (188 aa).

The protein belongs to the elongation factor P family.

Its subcellular location is the cytoplasm. It participates in protein biosynthesis; polypeptide chain elongation. Involved in peptide bond synthesis. Stimulates efficient translation and peptide-bond synthesis on native or reconstituted 70S ribosomes in vitro. Probably functions indirectly by altering the affinity of the ribosome for aminoacyl-tRNA, thus increasing their reactivity as acceptors for peptidyl transferase. The chain is Elongation factor P from Chlorobium chlorochromatii (strain CaD3).